The following is a 556-amino-acid chain: Arginine--tRNA ligase (556 aa).

A 'HIGH' region motif is present at residues Ala132–Gly142.

This sequence belongs to the class-I aminoacyl-tRNA synthetase family. Monomer.

Its subcellular location is the cytoplasm. The catalysed reaction is tRNA(Arg) + L-arginine + ATP = L-arginyl-tRNA(Arg) + AMP + diphosphate. This Kocuria rhizophila (strain ATCC 9341 / DSM 348 / NBRC 103217 / DC2201) protein is Arginine--tRNA ligase.